Reading from the N-terminus, the 122-residue chain is MVTTKAVGDGGEDRALAYLLRAGLKLVERNYRVAGGPRVRGGEIDLVLRDRDGTLVFVEVRTRATRSHGGAAATVSGVKQQRIVRAARHYLMRFASPPPCRFDVVAIEGEHIAWLRAAFDAS.

This sequence belongs to the UPF0102 family.

In Methylibium petroleiphilum (strain ATCC BAA-1232 / LMG 22953 / PM1), this protein is UPF0102 protein Mpe_A3766.